Reading from the N-terminus, the 118-residue chain is DNA-binding protein inhibitor ID-3-A (118 aa).

Positions 32 to 84 constitute a bHLH domain; it reads SHKGPGMDEPMGLLYDMNGCYSKLKELVPGIPQGSKLSQVEILQHVIDYIFDL.

Homodimer. Heterodimer with other HLH proteins. Interacts (via HLH domain) with the bHLH protein hes4/hairy2 (via Orange domain). Interacts with stat3. As to expression, at gastrula stage, expressed in all three germ layers, but becomes localized to discrete domains of the developing nervous system during neurulation, including the anterior neural plate, cement gland, eye anlagen, otic placode and both cranial and trunk premigratory and early migratory neural crest cells. Also expressed in the most dorsal and ventral portions of the myotome, the developing heart and anterior blood islets, and in the tail fin mesenchyme. Expressed at a low level in limbs, with expression decreasing as limbs develop, but expressed at a high level in blastemas (regenerated limbs), where expression is localized to both the blastermal epidermis and mesenchyme. Widely expressed in adults including the liver and heart.

The protein localises to the nucleus. Its function is as follows. Transcriptional regulator (lacking a basic DNA binding domain) which negatively regulates the basic helix-loop-helix (bHLH) transcription factors by forming heterodimers and inhibiting their DNA binding and transcriptional activity. Influences cell fate decisions in the embryo by sequestering and blocking the activity of the bHLH transcription factors that control these decisions. Inhibits the binding of myogenic bHLH-containing complexes to E-box DNA, thereby preventing activation of muscle-specific target genes. Also inhibits the activity of neurogenic factor neurod1/neuroD. Plays a role in cell cycle progression and survival of neural crest progenitors; binding to either hes4-B/hairy2b or stat3 blocks the formation of transcription factor complexes and the repressor function of hes4-B/hairy2B, to allow neural crest progenitors to differentiate. May play a role in the regulation of the circadian rhythm. This Xenopus laevis (African clawed frog) protein is DNA-binding protein inhibitor ID-3-A (id3-a).